The chain runs to 42 residues: Photosystem I reaction center subunit IX (42 aa).

The chain crosses the membrane as a helical span at residues 7 to 27 (YLSIAPVLATLWFGFLVGSLI).

Belongs to the PsaJ family.

The protein resides in the plastid membrane. Functionally, may help in the organization of the PsaE and PsaF subunits. This is Photosystem I reaction center subunit IX from Aneura mirabilis (Parasitic liverwort).